The following is a 293-amino-acid chain: ATP phosphoribosyltransferase (293 aa).

Belongs to the ATP phosphoribosyltransferase family. Long subfamily. Mg(2+) serves as cofactor.

It is found in the cytoplasm. It catalyses the reaction 1-(5-phospho-beta-D-ribosyl)-ATP + diphosphate = 5-phospho-alpha-D-ribose 1-diphosphate + ATP. Its pathway is amino-acid biosynthesis; L-histidine biosynthesis; L-histidine from 5-phospho-alpha-D-ribose 1-diphosphate: step 1/9. Feedback inhibited by histidine. Functionally, catalyzes the condensation of ATP and 5-phosphoribose 1-diphosphate to form N'-(5'-phosphoribosyl)-ATP (PR-ATP). Has a crucial role in the pathway because the rate of histidine biosynthesis seems to be controlled primarily by regulation of HisG enzymatic activity. The polypeptide is ATP phosphoribosyltransferase (Nitratidesulfovibrio vulgaris (strain DSM 19637 / Miyazaki F) (Desulfovibrio vulgaris)).